A 367-amino-acid chain; its full sequence is UDP-N-acetylglucosamine--N-acetylmuramyl-(pentapeptide) pyrophosphoryl-undecaprenol N-acetylglucosamine transferase (367 aa).

UDP-N-acetyl-alpha-D-glucosamine-binding positions include threonine 13–glycine 15, asparagine 127, arginine 168, serine 200, isoleucine 251, and glutamine 296.

Belongs to the glycosyltransferase 28 family. MurG subfamily.

The protein resides in the cell inner membrane. It carries out the reaction di-trans,octa-cis-undecaprenyl diphospho-N-acetyl-alpha-D-muramoyl-L-alanyl-D-glutamyl-meso-2,6-diaminopimeloyl-D-alanyl-D-alanine + UDP-N-acetyl-alpha-D-glucosamine = di-trans,octa-cis-undecaprenyl diphospho-[N-acetyl-alpha-D-glucosaminyl-(1-&gt;4)]-N-acetyl-alpha-D-muramoyl-L-alanyl-D-glutamyl-meso-2,6-diaminopimeloyl-D-alanyl-D-alanine + UDP + H(+). Its pathway is cell wall biogenesis; peptidoglycan biosynthesis. Functionally, cell wall formation. Catalyzes the transfer of a GlcNAc subunit on undecaprenyl-pyrophosphoryl-MurNAc-pentapeptide (lipid intermediate I) to form undecaprenyl-pyrophosphoryl-MurNAc-(pentapeptide)GlcNAc (lipid intermediate II). This chain is UDP-N-acetylglucosamine--N-acetylmuramyl-(pentapeptide) pyrophosphoryl-undecaprenol N-acetylglucosamine transferase, found in Flavobacterium psychrophilum (strain ATCC 49511 / DSM 21280 / CIP 103535 / JIP02/86).